A 155-amino-acid polypeptide reads, in one-letter code: Endoribonuclease YbeY (155 aa).

H114, H118, and H124 together coordinate Zn(2+).

The protein belongs to the endoribonuclease YbeY family. It depends on Zn(2+) as a cofactor.

It is found in the cytoplasm. Single strand-specific metallo-endoribonuclease involved in late-stage 70S ribosome quality control and in maturation of the 3' terminus of the 16S rRNA. In Buchnera aphidicola subsp. Acyrthosiphon pisum (strain APS) (Acyrthosiphon pisum symbiotic bacterium), this protein is Endoribonuclease YbeY.